Here is a 248-residue protein sequence, read N- to C-terminus: 3-deoxy-manno-octulosonate cytidylyltransferase (248 aa).

This sequence belongs to the KdsB family.

Its subcellular location is the cytoplasm. The catalysed reaction is 3-deoxy-alpha-D-manno-oct-2-ulosonate + CTP = CMP-3-deoxy-beta-D-manno-octulosonate + diphosphate. It functions in the pathway nucleotide-sugar biosynthesis; CMP-3-deoxy-D-manno-octulosonate biosynthesis; CMP-3-deoxy-D-manno-octulosonate from 3-deoxy-D-manno-octulosonate and CTP: step 1/1. It participates in bacterial outer membrane biogenesis; lipopolysaccharide biosynthesis. In terms of biological role, activates KDO (a required 8-carbon sugar) for incorporation into bacterial lipopolysaccharide in Gram-negative bacteria. The chain is 3-deoxy-manno-octulosonate cytidylyltransferase from Alteromonas mediterranea (strain DSM 17117 / CIP 110805 / LMG 28347 / Deep ecotype).